The chain runs to 186 residues: uncharacterized protein (186 aa).

This is an uncharacterized protein from Acanthamoeba polyphaga (Amoeba).